The primary structure comprises 508 residues: Photosystem II CP47 reaction center protein (508 aa).

A run of 6 helical transmembrane segments spans residues 21-36 (SVHL…WAGS), 101-115 (IILS…IWHW), 140-156 (GIHL…FGAF), 203-218 (IAAG…FHLS), 237-252 (VLSS…AFVV), and 457-472 (TFAL…HGAR).

Belongs to the PsbB/PsbC family. PsbB subfamily. In terms of assembly, PSII is composed of 1 copy each of membrane proteins PsbA, PsbB, PsbC, PsbD, PsbE, PsbF, PsbH, PsbI, PsbJ, PsbK, PsbL, PsbM, PsbT, PsbX, PsbY, PsbZ, Psb30/Ycf12, at least 3 peripheral proteins of the oxygen-evolving complex and a large number of cofactors. It forms dimeric complexes. The cofactor is Binds multiple chlorophylls. PSII binds additional chlorophylls, carotenoids and specific lipids..

The protein resides in the plastid. The protein localises to the chloroplast thylakoid membrane. Functionally, one of the components of the core complex of photosystem II (PSII). It binds chlorophyll and helps catalyze the primary light-induced photochemical processes of PSII. PSII is a light-driven water:plastoquinone oxidoreductase, using light energy to abstract electrons from H(2)O, generating O(2) and a proton gradient subsequently used for ATP formation. The protein is Photosystem II CP47 reaction center protein of Adiantum capillus-veneris (Maidenhair fern).